A 307-amino-acid chain; its full sequence is NAD kinase (307 aa).

Catalysis depends on D78, which acts as the Proton acceptor. Residues 78 to 79 (DG), H83, 154 to 155 (NE), R165, R182, D184, and Q255 contribute to the NAD(+) site.

It belongs to the NAD kinase family. A divalent metal cation serves as cofactor.

Its subcellular location is the cytoplasm. The enzyme catalyses NAD(+) + ATP = ADP + NADP(+) + H(+). Functionally, involved in the regulation of the intracellular balance of NAD and NADP, and is a key enzyme in the biosynthesis of NADP. Catalyzes specifically the phosphorylation on 2'-hydroxyl of the adenosine moiety of NAD to yield NADP. This chain is NAD kinase, found in Halorhodospira halophila (strain DSM 244 / SL1) (Ectothiorhodospira halophila (strain DSM 244 / SL1)).